The sequence spans 689 residues: MSEEPVSGTTVEIEEDTHTPPNSPVLETFSLSPEPEAEACPNTDRYLSANLLCKHLQRQSAIVLDSIKDQLQVPTSVSELSCAYERSLLCPNIPPKQQSNGTCEANPKLNFYPTFLVPETLATYHIFFVNQKIPVSCKANRAKADKALTLQEGDCLPDYETMDTVSRVFEGLGGEVVAENALQNNDSVLVELKEDNPRLAVLKRNLSVSHFAYPAVHLPPKIITTVMNNLLVKRANPSADVSELDPDGGQEVVSDTELSRWLNTSDPETLEKQRKLVMGSVLVTVVLECMQRLFTSKDMVKKIGETLHYTFRHGYVSLACKISNVELTNVVTYMGILHENRLGQTTLHHTIQGETRRDYIRDSIFLILIHTWQTAMGIWQQCLEEENLKELAKLVQKIKKPLYTETSQRLMGKQLANVVFPPKLLETFNKGLPDIVNQSMMQNFRSFILERSGILPSMTCALPTDFIPIHFKECPPTMWPYTYLLRLANFFMYHNDLCYDMEGEGLLEHYCRCNLCTPHRCLATNPAMLNETQLIGTFDIRGPGGENGAESSSGLKLTAGMWTSAFLRKFESSDYHAHKIHFYENQSKPPSVEPTPCVITQSSILAQLHDIKKAREEFLLKKGQGQYLDPHTGEPLNAAGPSVESGHEFQGDGRHREPKRGRHFRQRGGPRKPPRAHAGGEPDVRGTTS.

The interval M1–P24 is disordered. The tract at residues V226 to C289 is binding to host EIF4G. The RRM domain maps to R292–L410. Phosphotyrosine; by host occurs at positions 309 and 627. Positions G625–S689 are disordered. Residues S645–H655 are compositionally biased toward basic and acidic residues. Residues R656–R675 are compositionally biased toward basic residues. Residues A678–S689 are compositionally biased toward basic and acidic residues.

Belongs to the adenoviridae shutoff protein family. Monomer. Interacts with hexon protein; this interaction allows chaperoning and trimerization of hexon proteins. Interacts (via N-terminus) with host initiation factor EIF4G (via C-terminus). Interacts (via RRM domain) with viral mRNAs that contain the tripartite leader; this interaction allows ribosome shunting and expression of viral late mRNAs. In terms of processing, might be cleaved by the viral protease. Post-translationally, phosphorylated. Tyrosine phosphorylation enhances preferential binding to tripartite leader mRNAs and allows ribosome shunting. Methylated. Asymmetric dimethylation by host PRMT1 of the Arg/Gly-rich region may regulate shutoff protein binding to hexon and promote the capsid assembly in the nucleus.

Its subcellular location is the host cytoplasm. Protein that inhibits host translation while promoting late viral translation by ribosome shunting. Blocks host cap-dependent translation by binding to eIF4G, displacing MKNK1 from cap initiation complexes and preventing EIF4E phosphorylation. Binds to the tripartite leader sequence of viral late mRNAs and recruits host eIF4G, PABPC1/poly-A binding protein and 40S ribosomes subunits on viral mRNAs, allowing ribosome shunting and efficient translation of late viral mRNAs even though conventional translation via ribosome scanning from the cap has been shut off in the host cell. During assembly, acts as a chaperone protein that helps hexon proteins assembly into trimers. The polypeptide is Shutoff protein (Canis lupus familiaris (Dog)).